Reading from the N-terminus, the 33-residue chain is Large ribosomal subunit protein eL28 (33 aa).

The protein belongs to the eukaryotic ribosomal protein eL28 family. Component of the large ribosomal subunit.

It localises to the cytoplasm. Component of the large ribosomal subunit. The ribosome is a large ribonucleoprotein complex responsible for the synthesis of proteins in the cell. In Xenopus laevis (African clawed frog), this protein is Large ribosomal subunit protein eL28 (rpl28).